We begin with the raw amino-acid sequence, 472 residues long: 6-phosphogluconate dehydrogenase, decarboxylating (472 aa).

Residues 10 to 15, 33 to 35, 74 to 76, and Asn-102 contribute to the NADP(+) site; these read GMAVMG, NRT, and VQA. Residues Asn-102 and 128 to 130 contribute to the substrate site; that span reads SGG. The Proton acceptor role is filled by Lys-184. 187–188 serves as a coordination point for substrate; sequence HN. Glu-191 (proton donor) is an active-site residue. Substrate-binding residues include Tyr-192, Lys-262, Arg-289, Arg-447, and His-453.

Belongs to the 6-phosphogluconate dehydrogenase family. In terms of assembly, homodimer.

The catalysed reaction is 6-phospho-D-gluconate + NADP(+) = D-ribulose 5-phosphate + CO2 + NADPH. Its pathway is carbohydrate degradation; pentose phosphate pathway; D-ribulose 5-phosphate from D-glucose 6-phosphate (oxidative stage): step 3/3. Catalyzes the oxidative decarboxylation of 6-phosphogluconate to ribulose 5-phosphate and CO(2), with concomitant reduction of NADP to NADPH. The sequence is that of 6-phosphogluconate dehydrogenase, decarboxylating (gnd) from Lactococcus lactis subsp. cremoris (strain MG1363).